The following is a 203-amino-acid chain: Probable cytochrome c oxidase subunit 3 (203 aa).

A run of 5 helical transmembrane segments spans residues 30–50 (IVWL…YFSA), 71–91 (VPVT…VFAA), 96–116 (IFGL…FVLG), 143–163 (ATGF…FLLV), and 179–199 (IVVS…FTVI).

It belongs to the cytochrome c oxidase subunit 3 family.

The protein localises to the cell membrane. The catalysed reaction is 4 Fe(II)-[cytochrome c] + O2 + 8 H(+)(in) = 4 Fe(III)-[cytochrome c] + 2 H2O + 4 H(+)(out). The protein is Probable cytochrome c oxidase subunit 3 (ctaE) of Mycobacterium bovis (strain ATCC BAA-935 / AF2122/97).